The sequence spans 465 residues: Cysteine--tRNA ligase (465 aa).

A Zn(2+)-binding site is contributed by Cys27. The short motif at 29 to 39 (PTTYNYIHIGN) is the 'HIGH' region element. The Zn(2+) site is built by Cys207, His232, and Glu236. Residues 264–268 (KMSKS) carry the 'KMSKS' region motif. Lys267 is a binding site for ATP.

This sequence belongs to the class-I aminoacyl-tRNA synthetase family. As to quaternary structure, monomer. Requires Zn(2+) as cofactor.

It is found in the cytoplasm. It catalyses the reaction tRNA(Cys) + L-cysteine + ATP = L-cysteinyl-tRNA(Cys) + AMP + diphosphate. The polypeptide is Cysteine--tRNA ligase (Carboxydothermus hydrogenoformans (strain ATCC BAA-161 / DSM 6008 / Z-2901)).